A 274-amino-acid chain; its full sequence is Large ribosomal subunit protein uL2 (274 aa).

Disordered regions lie at residues 36–61 (QKSKTGGRNSNGRITTRHRGGGHKQR) and 223–274 (VAMN…RRKR). A compositionally biased stretch (polar residues) spans 37–46 (KSKTGGRNSN). Basic residues-rich tracts occupy residues 50-61 (TTRHRGGGHKQR) and 254-274 (KGHKTRKNKRTDKYIVRRRKR).

Belongs to the universal ribosomal protein uL2 family. In terms of assembly, part of the 50S ribosomal subunit. Forms a bridge to the 30S subunit in the 70S ribosome.

In terms of biological role, one of the primary rRNA binding proteins. Required for association of the 30S and 50S subunits to form the 70S ribosome, for tRNA binding and peptide bond formation. It has been suggested to have peptidyltransferase activity; this is somewhat controversial. Makes several contacts with the 16S rRNA in the 70S ribosome. This Halorhodospira halophila (strain DSM 244 / SL1) (Ectothiorhodospira halophila (strain DSM 244 / SL1)) protein is Large ribosomal subunit protein uL2.